The following is a 173-amino-acid chain: T-cell receptor beta-2 chain C region (173 aa).

Positions 1–146 (EDLRNVTPPK…GVLSATILYE (146 aa)) are c region. 2 N-linked (GlcNAc...) asparagine glycosylation sites follow: asparagine 67 and asparagine 116. Residues 147-168 (ILLGKATLYAVLVSGLVLMAMV) form a helical membrane-spanning segment. Topologically, residues 169–173 (KKKNS) are cytoplasmic.

It localises to the membrane. The polypeptide is T-cell receptor beta-2 chain C region (Mus musculus (Mouse)).